The following is a 557-amino-acid chain: MSKLIRRVVTVLALTSMASSFASGKIEAAAAESLATRFIASTENSDDNVFQATAKKVRFGRNKNQRQEQKHTGAFCDKEFYPCEGGQCQPVDATQESCYGKMYCVRVNDDCNVEISQSVPEYATVGSPYPIEILAVGKKDCVNVVITQQLPCEVEFVSSDPATTPTSDSKLIWTIDRLGQGEKCKITVWVKPLKEGCCFTAATVCACPELRSYTKCGQPAICIKQEGPECACLRCPVCYKIEVCNTGSAIARNVVVDNPVPDGYTHASGQRVLSFNLGDMRPGDSKCFCVEFCPQKRGKVTNVATVSYCGGHKCSANVTTVVNEPCVQVNISGADWSYVCKPVEYTIVVSNPGDLKLYDVVIEDTAPSGATILEAAGAEICCNKAVWCIKEMCPGETLQFKVVAKAQSPGKFTNQVVVKTNSDCGTCTSCAEVTTHWKGLAATHMCVIDTNDPICVGENTVYRICVTNRGSAEDTNVSLILKFSKELQPVSSSGPTKGTITGNTVVFDALPKLGSKESVEFSVTLKGIAPGDARGEAILSSDTLTVPVADTENTHVY.

A signal peptide spans 1 to 22 (MSKLIRRVVTVLALTSMASSFA). Residues 23 to 40 (SGKIEAAAAESLATRFIA) constitute a propeptide that is removed on maturation.

Part of a disulfide cross-linked outer membrane complex (COMC) composed of the major outer membrane porin (MOMP), the small cysteine-rich protein (omcA) and the large cysteine-rich periplasmic protein (omcB).

The protein localises to the periplasm. Its function is as follows. In elementary bodies (EBs, the infectious stage, which is able to survive outside the host cell) provides the structural integrity of the outer envelope through disulfide cross-links with the small cysteine-rich protein and the major outer membrane porin. It has been described in publications as the Sarkosyl-insoluble COMC (Chlamydia outer membrane complex), and serves as the functional equivalent of peptidoglycan. This chain is Large cysteine-rich periplasmic protein omcB (omcB), found in Chlamydophila psittaci (strain ATCC VR-125 / 6BC) (Chlamydia psittaci).